The primary structure comprises 272 residues: MRDKVNINTVDISQLEVFFQPAKKPAKQTIVFAHGFSVHHSYFKSFSETLVDYDYYAPLWPGHNHHGFTDKELSPIHYAHLLVAWIEKQDLENIVLIGHSMGGAVASYALQFLKPQRVEKLVLLAPLSYSNLLNYYKIKKAFKKKDEKLSYFKRMFQPKFPDLQNDGQWQMELDKHTAMCKKLTFQIFKELSRLNSAYKTITIPAFLLLAQHDDFMPTKATLNYFNRFLIKKGNLQSGVILHSQHQMFNSKHESFCKAMHDILKHNKLSKIY.

Residue histidine 34 is part of the active site. Residue serine 100 is the Charge relay system of the active site.

It belongs to the lipase/esterase LIP3/BchO family.

In Mycoplasma pneumoniae (strain ATCC 29342 / M129 / Subtype 1) (Mycoplasmoides pneumoniae), this protein is Putative esterase/lipase 3.